A 188-amino-acid chain; its full sequence is Apolipoprotein M (188 aa).

Positions 1–22 (MFHQIWAALLYFYGIILNSIYQ) form a signal peptide, not cleaved. 3 disulfide bridges follow: cysteine 23/cysteine 167, cysteine 95/cysteine 183, and cysteine 128/cysteine 157. The N-linked (GlcNAc...) asparagine glycan is linked to asparagine 135. Residues glutamate 136 and arginine 143 each contribute to the tetradecanoate site.

Belongs to the calycin superfamily. Lipocalin family. Highly divergent. In terms of assembly, interacts with LRP2; LRP2 mediates APOM renal uptake and subsequent lysosomal degradation. As to expression, plasma protein. Expressed in liver and kidney.

It is found in the secreted. Probably involved in lipid transport. Can bind sphingosine-1-phosphate, myristic acid, palmitic acid and stearic acid, retinol, all-trans-retinoic acid and 9-cis-retinoic acid. The chain is Apolipoprotein M (APOM) from Homo sapiens (Human).